Reading from the N-terminus, the 190-residue chain is Casparian strip membrane protein 1 (190 aa).

At 1 to 24 (MKAESGSADAKLPLPPPVGRKRRG) the chain is on the cytoplasmic side. Residues 25–45 (LAILDFLLRLLAIGATLSAAI) form a helical membrane-spanning segment. Over 46-72 (AMGTNNETLKFFTQFFQFNARFYNLSA) the chain is Extracellular. 2 N-linked (GlcNAc...) asparagine glycosylation sites follow: N51 and N69. The chain crosses the membrane as a helical span at residues 73-93 (FIYFVIANATVGLYLLLSLPF). Over 94 to 107 (SIFDIVRPRAAAFR) the chain is Cytoplasmic. A helical transmembrane segment spans residues 108–128 (VLLIFFDTVMVAVCTSGAAAA). Residues 129 to 157 (TAIMYVARRGNTKTNWFSICQQFNSFCDQ) lie on the Extracellular side of the membrane. A helical membrane pass occupies residues 158–178 (ATGALGASFAAVVLLILLVLL). The Cytoplasmic portion of the chain corresponds to 179 to 190 (SASTLHRQRADF).

This sequence belongs to the Casparian strip membrane proteins (CASP) family. In terms of assembly, homodimer and heterodimers.

The protein resides in the cell membrane. Its function is as follows. Regulates membrane-cell wall junctions and localized cell wall deposition. Required for establishment of the Casparian strip membrane domain (CSD) and the subsequent formation of Casparian strips, a cell wall modification of the root endodermis that determines an apoplastic barrier between the intraorganismal apoplasm and the extraorganismal apoplasm and prevents lateral diffusion. The chain is Casparian strip membrane protein 1 from Pinus taeda (Loblolly pine).